A 481-amino-acid polypeptide reads, in one-letter code: UDP-glycosyltransferase 71K2 (481 aa).

UDP-alpha-D-glucose is bound by residues Ser-285, 350–351, 368–376, and 390–393; these read WA, HCGWNSILE, and YAEQ.

Belongs to the UDP-glycosyltransferase family.

In terms of biological role, glycosyltransferase that possesses chalcone and flavonol 2'-O-glycosyltransferase activity. Converts phloretin to phlorizin (phloretin 2'-O-glucoside), a potent antioxidant. Possesses glycosyltransferase activity toward quercetin, isoliquiritigenin, butein and caffeic acid. This is UDP-glycosyltransferase 71K2 from Pyrus communis (Pear).